The chain runs to 31 residues: Cyclotide psybry A (31 aa).

Positions 1–31 (GFNPCGETCIWFPTCHAPGCTCSIANICVRN) form a cross-link, cyclopeptide (Gly-Asn). 3 disulfide bridges follow: Cys-5–Cys-20, Cys-9–Cys-22, and Cys-15–Cys-28.

In terms of processing, this is a cyclic peptide.

Probably participates in a plant defense mechanism. This chain is Cyclotide psybry A, found in Psychotria brachyceras.